A 307-amino-acid polypeptide reads, in one-letter code: Ribonuclease Z (307 aa).

Residues histidine 63, histidine 65, aspartate 67, histidine 68, histidine 141, aspartate 212, and histidine 270 each coordinate Zn(2+). The active-site Proton acceptor is the aspartate 67.

It belongs to the RNase Z family. As to quaternary structure, homodimer. It depends on Zn(2+) as a cofactor.

The catalysed reaction is Endonucleolytic cleavage of RNA, removing extra 3' nucleotides from tRNA precursor, generating 3' termini of tRNAs. A 3'-hydroxy group is left at the tRNA terminus and a 5'-phosphoryl group is left at the trailer molecule.. Zinc phosphodiesterase, which displays some tRNA 3'-processing endonuclease activity. Probably involved in tRNA maturation, by removing a 3'-trailer from precursor tRNA. In Bacillus cereus (strain ATCC 10987 / NRS 248), this protein is Ribonuclease Z.